The following is a 310-amino-acid chain: MILTVTLNPSIDISYCLENFNMDTVNRVTDVSKTPGGKGLNVTRVLSQLGDNVVATGLLGGDFGDFIRSGLDALEIRHQFLSIGGETRHCIAVLHEGQQTEILEKGPHITKDEADAFLNHLKLIFDAATIITVSGSLPKGLPSDYYARLISLANHFNKKVVLDCSGEALRSVLKSSAKPTVIKPNLEELTQLIGKPISYSLDELKSTLQQDLFRGIDWVIVSLGARGAFAKHGNHYYQVTIPKIEVINPVGSGDATVAGIASALEHQLDDTNLLKRANVLGMLNAQETLTGHINLTYYQELISQIQVKEV.

It belongs to the carbohydrate kinase PfkB family. LacC subfamily.

It carries out the reaction D-tagatofuranose 6-phosphate + ATP = D-tagatofuranose 1,6-bisphosphate + ADP + H(+). It functions in the pathway carbohydrate metabolism; D-tagatose 6-phosphate degradation; D-glyceraldehyde 3-phosphate and glycerone phosphate from D-tagatose 6-phosphate: step 1/2. The protein is Tagatose-6-phosphate kinase of Streptococcus agalactiae serotype V (strain ATCC BAA-611 / 2603 V/R).